Consider the following 879-residue polypeptide: Beta-alanyl-bioamine nonribosomal peptide synthetase ebony (879 aa).

Residues Phe-26–Lys-540 are adenylation. The Carrier domain maps to Glu-573–His-650. Ser-611 bears the O-(pantetheine 4'-phosphoryl)serine mark. The interval Leu-666–Gln-679 is condensation. Glu-696 lines the dopamine pocket. Glu-696 lines the histamine pocket. Residues Thr-825 and Asn-827 each coordinate beta-alanine.

It belongs to the NRP synthetase family. Pantetheine 4'-phosphate serves as cofactor. The cofactor is Mg(2+). Expressed in the optic neuropils in the lamina and in distinct cells at the distal border of the medulla cortex (at protein level). Expressed in the protocerebrum and thoracic ganglia (at protein level). Expressed in antennal lobes, antennal nerves and subesophagic ganglion (at protein level). Specifically, expressed in epithelial glial cells of the medulla that surround the synaptic cleft of photoreceptor axonal endings (at protein level). Expressed in some cells in the cuticle.

It is found in the cytoplasm. It catalyses the reaction histamine + beta-alanine + ATP = carcinine + AMP + diphosphate + H(+). The enzyme catalyses beta-alanine + ATP + H(+) = beta-alanyl-5'-AMP + diphosphate. It carries out the reaction beta-alanyl-5'-AMP + holo-[peptidyl-carrier protein] = beta-alanyl-[peptidyl-carrier protein] + AMP + H(+). The catalysed reaction is beta-alanyl-[peptidyl-carrier protein] + histamine = carcinine + holo-[peptidyl-carrier protein] + H(+). It catalyses the reaction dopamine + beta-alanine + ATP = beta-alanyl-dopamine + AMP + diphosphate + H(+). The enzyme catalyses beta-alanyl-[peptidyl-carrier protein] + dopamine = beta-alanyl-dopamine + holo-[peptidyl-carrier protein] + H(+). Its function is as follows. Nonribosomal peptide synthase which is required for the regulation of histamine and dopamine levels in various tissues through their condensation with beta-alanine. In epithelial glial cells, plays an essential role in the inactivation of histamine, the main neurotransmitter in the optical nerve system, by catalyzing the conversion of histamine into carcinine. In the cuticle, catalyzes the condensation of beta-alanine with dopamine to form beta-alanyl-dopamine (NBAD), a metabolite involved in the pigmentation and sclerotization of the insect cuticle. Also, regulates the cuticular hydrocarbon composition in females. Acts downstream of the body clock to regulate circadian behavioral rhythms. Can also condense beta-alanine with biogenic amines tyramine, octopamine, and serotonin in vitro. The polypeptide is Beta-alanyl-bioamine nonribosomal peptide synthetase ebony (Drosophila melanogaster (Fruit fly)).